The sequence spans 370 residues: Cytochrome b (370 aa).

A run of 4 helical transmembrane segments spans residues 25-45, 69-90, 105-125, and 170-190; these read FGSM…FLAV, WMMQ…YIHI, WLSG…GYVL, and FFAL…LHVM. Heme b-binding residues include His-75 and His-89. Heme b-binding residues include His-174 and His-188. A ubiquinone is bound at residue His-193. 4 consecutive transmembrane segments (helical) span residues 218 to 238, 280 to 300, 312 to 332, and 339 to 358; these read YKDL…ISFY, LGGA…PFTH, FMQL…WTAT, and FTMI…ISNP.

Belongs to the cytochrome b family. The cytochrome bc1 complex contains 3 respiratory subunits (MT-CYB, CYC1 and UQCRFS1), 2 core proteins (UQCRC1 and UQCRC2) and probably 6 low-molecular weight proteins. Heme b serves as cofactor.

It is found in the mitochondrion inner membrane. Its function is as follows. Component of the ubiquinol-cytochrome c reductase complex (complex III or cytochrome b-c1 complex) that is part of the mitochondrial respiratory chain. The b-c1 complex mediates electron transfer from ubiquinol to cytochrome c. Contributes to the generation of a proton gradient across the mitochondrial membrane that is then used for ATP synthesis. In Corallus hortulanus enydris (Garden tree boa), this protein is Cytochrome b (MT-CYB).